The sequence spans 359 residues: Putative mannose-1-phosphate guanyltransferase (359 aa).

This sequence belongs to the transferase hexapeptide repeat family.

It carries out the reaction alpha-D-mannose 1-phosphate + GTP + H(+) = GDP-alpha-D-mannose + diphosphate. The polypeptide is Putative mannose-1-phosphate guanyltransferase (mpg1) (Sulfolobus acidocaldarius (strain ATCC 33909 / DSM 639 / JCM 8929 / NBRC 15157 / NCIMB 11770)).